The primary structure comprises 459 residues: Ribosomal protein uS12 methylthiotransferase RimO (459 aa).

The MTTase N-terminal domain occupies 11-126 (PKVGMVSLGC…VMQAVHSHLP (116 aa)). Positions 20, 56, 85, 157, 161, and 164 each coordinate [4Fe-4S] cluster. Residues 143–388 (LTPRHYAYLK…MEVAEEVSAA (246 aa)) enclose the Radical SAM core domain. Residues 391-459 (ARKVGKTLKV…ADGHDLWGEV (69 aa)) enclose the TRAM domain.

Belongs to the methylthiotransferase family. RimO subfamily. [4Fe-4S] cluster serves as cofactor.

The protein resides in the cytoplasm. It catalyses the reaction L-aspartate(89)-[ribosomal protein uS12]-hydrogen + (sulfur carrier)-SH + AH2 + 2 S-adenosyl-L-methionine = 3-methylsulfanyl-L-aspartate(89)-[ribosomal protein uS12]-hydrogen + (sulfur carrier)-H + 5'-deoxyadenosine + L-methionine + A + S-adenosyl-L-homocysteine + 2 H(+). Functionally, catalyzes the methylthiolation of an aspartic acid residue of ribosomal protein uS12. This Burkholderia pseudomallei (strain K96243) protein is Ribosomal protein uS12 methylthiotransferase RimO.